The primary structure comprises 703 residues: Peptide transporter CstA (703 aa).

A run of 16 helical transmembrane segments spans residues 6 to 26, 29 to 49, 87 to 107, 118 to 138, 162 to 182, 190 to 210, 221 to 241, 256 to 276, 282 to 302, 319 to 339, 374 to 394, 463 to 483, 514 to 534, 547 to 567, 574 to 594, and 660 to 680; these read TKIL…YLAL, GESV…MIGY, VLFG…GPIL, LWIL…VLFI, VAMV…AMVV, PWGL…GIYM, ASII…VIAA, LAIV…WFLL, LSTF…VLVA, GPVF…CGAI, AVAI…YFAI, LMAF…LTAV, GLLA…QGAI, FGVS…TILV, YTWV…YGGI, and AILC…CIGI.

This sequence belongs to the peptide transporter carbon starvation (CstA) (TC 2.A.114) family.

Its subcellular location is the cell inner membrane. In terms of biological role, involved in the uptake of dipeptides and tripeptides. May influence host-pathogen interactions. Involved in motility and agglutination, and has a role in stimulation of dendritic cells. The chain is Peptide transporter CstA from Campylobacter jejuni subsp. jejuni serotype O:2 (strain ATCC 700819 / NCTC 11168).